We begin with the raw amino-acid sequence, 726 residues long: Catalase-peroxidase (726 aa).

Residues 1-33 (MSTSDDIHNTTATGKCPFHQGGHDQSAGAGTTT) are disordered. The tryptophyl-tyrosyl-methioninium (Trp-Tyr) (with M-252) cross-link spans 105–226 (WHGAGTYRSI…LGATEMGLIY (122 aa)). The active-site Proton acceptor is the H106. Positions 226 to 252 (YVNPEGPDHSGEPLSAAAAIRATFGNM) form a cross-link, tryptophyl-tyrosyl-methioninium (Tyr-Met) (with W-105). H267 lines the heme b pocket.

The protein belongs to the peroxidase family. Peroxidase/catalase subfamily. Homodimer or homotetramer. The cofactor is heme b. Post-translationally, formation of the three residue Trp-Tyr-Met cross-link is important for the catalase, but not the peroxidase activity of the enzyme.

The enzyme catalyses H2O2 + AH2 = A + 2 H2O. It catalyses the reaction 2 H2O2 = O2 + 2 H2O. Functionally, bifunctional enzyme with both catalase and broad-spectrum peroxidase activity. The protein is Catalase-peroxidase of Shigella flexneri.